Consider the following 248-residue polypeptide: uncharacterized protein (248 aa).

S141 is a substrate binding site. Y154 functions as the Proton acceptor in the catalytic mechanism.

The protein belongs to the short-chain dehydrogenases/reductases (SDR) family.

This is an uncharacterized protein from Methylorubrum extorquens (strain ATCC 14718 / DSM 1338 / JCM 2805 / NCIMB 9133 / AM1) (Methylobacterium extorquens).